The sequence spans 380 residues: Queuine tRNA-ribosyltransferase (380 aa).

Catalysis depends on Asp96, which acts as the Proton acceptor. Substrate contacts are provided by residues 96-100 (DSGGF), Asp150, Gln193, and Gly220. The segment at 251–257 (GVGAPDS) is RNA binding. Residue Asp270 is the Nucleophile of the active site. The segment at 275 to 279 (TRIAR) is RNA binding; important for wobble base 34 recognition. Residues Cys308, Cys310, Cys313, and His339 each contribute to the Zn(2+) site.

This sequence belongs to the queuine tRNA-ribosyltransferase family. As to quaternary structure, homodimer. Within each dimer, one monomer is responsible for RNA recognition and catalysis, while the other monomer binds to the replacement base PreQ1. The cofactor is Zn(2+).

It catalyses the reaction 7-aminomethyl-7-carbaguanine + guanosine(34) in tRNA = 7-aminomethyl-7-carbaguanosine(34) in tRNA + guanine. It participates in tRNA modification; tRNA-queuosine biosynthesis. Catalyzes the base-exchange of a guanine (G) residue with the queuine precursor 7-aminomethyl-7-deazaguanine (PreQ1) at position 34 (anticodon wobble position) in tRNAs with GU(N) anticodons (tRNA-Asp, -Asn, -His and -Tyr). Catalysis occurs through a double-displacement mechanism. The nucleophile active site attacks the C1' of nucleotide 34 to detach the guanine base from the RNA, forming a covalent enzyme-RNA intermediate. The proton acceptor active site deprotonates the incoming PreQ1, allowing a nucleophilic attack on the C1' of the ribose to form the product. After dissociation, two additional enzymatic reactions on the tRNA convert PreQ1 to queuine (Q), resulting in the hypermodified nucleoside queuosine (7-(((4,5-cis-dihydroxy-2-cyclopenten-1-yl)amino)methyl)-7-deazaguanosine). The sequence is that of Queuine tRNA-ribosyltransferase from Streptococcus suis (strain 98HAH33).